A 92-amino-acid chain; its full sequence is PqqA binding protein (92 aa).

It belongs to the PqqD family. In terms of assembly, monomer. Interacts with PqqE.

It functions in the pathway cofactor biosynthesis; pyrroloquinoline quinone biosynthesis. Functionally, functions as a PqqA binding protein and presents PqqA to PqqE, in the pyrroloquinoline quinone (PQQ) biosynthetic pathway. The sequence is that of PqqA binding protein from Xanthomonas axonopodis pv. citri (strain 306).